A 559-amino-acid polypeptide reads, in one-letter code: Coiled-coil domain-containing protein 63 (559 aa).

Coiled-coil stretches lie at residues 14–70, 185–261, and 364–414; these read ELSE…QAET, EKAA…KLKS, and QQQS…VEKL.

Its function is as follows. Plays a role in spermiogenesis. Involved in the elongation of flagella and the formation of sperm heads. This is Coiled-coil domain-containing protein 63 from Rattus norvegicus (Rat).